The sequence spans 371 residues: Vasopressin V2 receptor (371 aa).

Topologically, residues 1-38 are extracellular; sequence MLLVSTVSAVPGLFSPPSSPSNSSQEELLDDRDPLLVR. N-linked (GlcNAc...) asparagine glycosylation is present at Asn-22. The chain crosses the membrane as a helical span at residues 39 to 63; sequence AELALLSTIFVAVALSNGLVLGALI. The Cytoplasmic portion of the chain corresponds to 64–77; it reads RRGRRGRWAPMHVF. A helical transmembrane segment spans residues 78 to 98; it reads ISHLCLADLAVALFQVLPQLA. The Extracellular portion of the chain corresponds to 99–113; the sequence is WDATDRFHGPDALCR. A helical transmembrane segment spans residues 114 to 135; the sequence is AVKYLQMVGMYASSYMILAMTL. Residues 136 to 159 are Cytoplasmic-facing; it reads DRHRAICRPMLAYRHGGGARWNRP. The helical transmembrane segment at 160–180 threads the bilayer; the sequence is VLVAWAFSLLLSLPQLFIFAQ. The Extracellular portion of the chain corresponds to 181–200; the sequence is RDVGNGSGVFDCWARFAEPW. N-linked (GlcNAc...) asparagine glycosylation is present at Asn-185. A helical transmembrane segment spans residues 201–220; sequence GLRAYVTWIALMVFVAPALG. Topologically, residues 221–271 are cytoplasmic; sequence IAACQVLIFREIHASLVPGPSERAGRRRRGRRTGSPSEGAHVSAAMAKTVR. The tract at residues 240–260 is disordered; that stretch reads PSERAGRRRRGRRTGSPSEGA. The helical transmembrane segment at 272-293 threads the bilayer; sequence MTLVIVIVYVLCWAPFFLVQLW. At 294 to 308 the chain is on the extracellular side; the sequence is AAWDPEAPLERPPFV. Residues 309–328 traverse the membrane as a helical segment; that stretch reads LLMLLASLNSCTNPWIYASF. Residues 329–371 lie on the Cytoplasmic side of the membrane; sequence SSSVSSELRSLLCCAQRHTTHSLGPQDESCATASSSLMKDTPS. 2 S-palmitoyl cysteine lipidation sites follow: Cys-341 and Cys-342. The tract at residues 349–371 is disordered; that stretch reads HSLGPQDESCATASSSLMKDTPS. Over residues 357 to 371 the composition is skewed to polar residues; that stretch reads SCATASSSLMKDTPS.

It belongs to the G-protein coupled receptor 1 family. Vasopressin/oxytocin receptor subfamily. In terms of assembly, interacts with ARRDC4. Identified in a complex containing at least ARRDC4, V2R and HGS. Interacts with TMEM147. Kidney.

The protein resides in the cell membrane. In terms of biological role, receptor for arginine vasopressin. The activity of this receptor is mediated by G proteins which activate adenylate cyclase. Involved in renal water reabsorption. The polypeptide is Vasopressin V2 receptor (Avpr2) (Rattus norvegicus (Rat)).